A 102-amino-acid polypeptide reads, in one-letter code: Large ribosomal subunit protein bL21 (102 aa).

Belongs to the bacterial ribosomal protein bL21 family. In terms of assembly, part of the 50S ribosomal subunit. Contacts protein L20.

Its function is as follows. This protein binds to 23S rRNA in the presence of protein L20. The protein is Large ribosomal subunit protein bL21 of Latilactobacillus sakei subsp. sakei (strain 23K) (Lactobacillus sakei subsp. sakei).